Here is a 286-residue protein sequence, read N- to C-terminus: ATP synthase gamma chain (286 aa).

This sequence belongs to the ATPase gamma chain family. As to quaternary structure, F-type ATPases have 2 components, CF(1) - the catalytic core - and CF(0) - the membrane proton channel. CF(1) has five subunits: alpha(3), beta(3), gamma(1), delta(1), epsilon(1). CF(0) has three main subunits: a, b and c.

The protein localises to the cell inner membrane. Produces ATP from ADP in the presence of a proton gradient across the membrane. The gamma chain is believed to be important in regulating ATPase activity and the flow of protons through the CF(0) complex. This is ATP synthase gamma chain from Shewanella sp. (strain ANA-3).